A 54-amino-acid chain; its full sequence is ComX pheromone (54 aa).

The propeptide occupies 1 to 46 (MQEIVGYLVKNPEVLDEVMKGRASLLNIDKDQLKSIVDAFGGLQIY). Trp-51 carries the 3'-geranyl-2',N2-cyclotryptophan lipid modification.

In terms of assembly, interacts directly with the sensor histidine kinase ComP and stimulates its activity. Trp-51 is modified by isoprenylation, probably by geranylation, which is essential for activity. Modified by the tryptophan prenyltransferase ComQ before export to the extracellular environment. The type of isoprenyl derivative differs among the different pherotypes and depends on ComX primary sequence.

It is found in the secreted. In terms of biological role, part of a major quorum-sensing system that regulates the development of genetic competence. Acts through the activation of the two-component regulatory system ComP/ComA composed of a sensor histidine kinase, ComP, and a response regulator, ComA. In Bacillus mojavensis, this protein is ComX pheromone.